The following is a 368-amino-acid chain: Lipoyl synthase, chloroplastic (368 aa).

2 disordered regions span residues 1–30 (MQSS…RGSV) and 42–61 (PTVG…RDPE). 7 residues coordinate [4Fe-4S] cluster: cysteine 94, cysteine 99, cysteine 105, cysteine 131, cysteine 135, cysteine 138, and serine 346. The region spanning 114–335 (GEGDGIATAT…KEYGESVGFR (222 aa)) is the Radical SAM core domain.

It belongs to the radical SAM superfamily. Lipoyl synthase family. It depends on [4Fe-4S] cluster as a cofactor.

It is found in the plastid. It localises to the chloroplast. The enzyme catalyses [[Fe-S] cluster scaffold protein carrying a second [4Fe-4S](2+) cluster] + N(6)-octanoyl-L-lysyl-[protein] + 2 oxidized [2Fe-2S]-[ferredoxin] + 2 S-adenosyl-L-methionine + 4 H(+) = [[Fe-S] cluster scaffold protein] + N(6)-[(R)-dihydrolipoyl]-L-lysyl-[protein] + 4 Fe(3+) + 2 hydrogen sulfide + 2 5'-deoxyadenosine + 2 L-methionine + 2 reduced [2Fe-2S]-[ferredoxin]. Its pathway is protein modification; protein lipoylation via endogenous pathway; protein N(6)-(lipoyl)lysine from octanoyl-[acyl-carrier-protein]: step 2/2. Functionally, catalyzes the radical-mediated insertion of two sulfur atoms into the C-6 and C-8 positions of the octanoyl moiety bound to the lipoyl domains of lipoate-dependent enzymes, thereby converting the octanoylated domains into lipoylated derivatives. This Sorghum bicolor (Sorghum) protein is Lipoyl synthase, chloroplastic.